A 123-amino-acid chain; its full sequence is Diacylglycerol kinase (123 aa).

Residues 15 to 32 (ILNATGYSLAGFLAAFRG) form a helical membrane-spanning segment. Glu33 contributes to the a divalent metal cation binding site. Helical transmembrane passes span 35-55 (AFRQ…LLDV), 61-81 (ALMI…SAIE), and 102-122 (GSAA…TILL). Glu74 functions as the Proton acceptor in the catalytic mechanism. Glu81 is a binding site for a divalent metal cation.

The protein belongs to the bacterial diacylglycerol kinase family. Requires Mg(2+) as cofactor.

It localises to the cell inner membrane. It carries out the reaction a 1,2-diacyl-sn-glycerol + ATP = a 1,2-diacyl-sn-glycero-3-phosphate + ADP + H(+). Catalyzes the ATP-dependent phosphorylation of sn-l,2-diacylglycerol (DAG) to phosphatidic acid. Involved in the recycling of diacylglycerol produced as a by-product during membrane-derived oligosaccharide (MDO) biosynthesis. This Pseudomonas aeruginosa (strain ATCC 15692 / DSM 22644 / CIP 104116 / JCM 14847 / LMG 12228 / 1C / PRS 101 / PAO1) protein is Diacylglycerol kinase (dgkA).